Reading from the N-terminus, the 99-residue chain is Malonate decarboxylase acyl carrier protein (99 aa).

Position 25 is an O-(phosphoribosyl dephospho-coenzyme A)serine (serine 25).

This sequence belongs to the MdcC family. Post-translationally, covalently binds the prosthetic group of malonate decarboxylase.

Its subcellular location is the cytoplasm. Functionally, subunit of malonate decarboxylase, it is an acyl carrier protein to which acetyl and malonyl thioester residues are bound via a 2'-(5''-phosphoribosyl)-3'-dephospho-CoA prosthetic group and turn over during the catalytic mechanism. In Pseudomonas fluorescens (strain Pf0-1), this protein is Malonate decarboxylase acyl carrier protein.